We begin with the raw amino-acid sequence, 344 residues long: F17a-G fimbrial adhesin (344 aa).

The first 22 residues, 1–22, serve as a signal peptide directing secretion; that stretch reads MTNFYKVFLAVFILVCCNISQA. A receptor-binding lectin domain region spans residues 23–199; it reads AVSFIGSTEN…SLNPFTLNDT (177 aa). A carbohydrate contacts are provided by residues 65–66, 110–111, and 139–142; these read AN, DT, and STQG. A disulfide bridge connects residues C75 and C132. The interval 200–344 is fimbrillin-binding domain; sequence VTSCRLLTPS…GISTFTFSYQ (145 aa). The segment at 288–308 is disordered; it reads LKFGPDSPVKGNENQWQLSTG. Positions 299 to 308 are enriched in polar residues; that stretch reads NENQWQLSTG.

The protein belongs to the fimbrial protein family.

Its subcellular location is the fimbrium. Essential fimbrial adhesion factor that mediates binding to N-acetylglucosamine-containing receptors in the host intestinal microvilli, leading to colonization of the intestinal tissue, and diarrhea or septicemia. Also confers adhesiveness to laminin and basement membranes. The protein is F17a-G fimbrial adhesin (f17aG) of Escherichia coli.